Reading from the N-terminus, the 287-residue chain is mRNA-capping enzyme regulatory subunit (287 aa).

Belongs to the chordopoxvirinae mRNA-capping enzyme regulatory subunit family. In terms of assembly, heterodimer of a catalytic and a regulatory subunit. Intrinsic methyltransferase activity of the catalytic subunit is weak and needs to be stimulated 30- to 50-fold by the regulatory subunit, which is itself catalytically inert.

It localises to the virion. Its function is as follows. Regulatory subunit of the mRNA cap enzyme which stabilizes the catalytic subunit and enhances its methyltransferase activity through an allosteric mechanism. Heterodimeric mRNA capping enzyme catalyzes the linkage of a N7-methyl-guanosine moiety to the first transcribed nucleotide (cap 0 structure), whereas the polymerase associated VP39 is responsible for a second methylation at the 2'-O position of the ribose (cap 1 structure). Functionally, the heterodimeric enzyme is also involved in early viral gene transcription termination and intermediate viral gene transcription initiation. Early gene transcription termination requires the termination factor VTF, the DNA-dependent ATPase NPH-I and the Rap94 subunit of the viral RNA polymerase, as well as the presence of a specific termination motif. Binds, together with RAP94, to the termination motif 5'-UUUUUNU-3' in the nascent early mRNA. In Vaccinia virus (strain Ankara) (VACV), this protein is mRNA-capping enzyme regulatory subunit.